Consider the following 311-residue polypeptide: HPr kinase/phosphorylase (311 aa).

Active-site residues include His-139 and Lys-160. 154-161 (GKSGIGKS) provides a ligand contact to ATP. Position 161 (Ser-161) interacts with Mg(2+). Asp-178 serves as the catalytic Proton acceptor; for phosphorylation activity. Proton donor; for dephosphorylation activity. An important for the catalytic mechanism of both phosphorylation and dephosphorylation region spans residues 201-210 (MEIRGLGIIN). Glu-202 contacts Mg(2+). The active site involves Arg-245. Residues 266–271 (PISSGR) form an important for the catalytic mechanism of dephosphorylation region.

It belongs to the HPrK/P family. Homohexamer. Mg(2+) is required as a cofactor.

The enzyme catalyses [HPr protein]-L-serine + ATP = [HPr protein]-O-phospho-L-serine + ADP + H(+). It carries out the reaction [HPr protein]-O-phospho-L-serine + phosphate + H(+) = [HPr protein]-L-serine + diphosphate. Catalyzes the ATP- as well as the pyrophosphate-dependent phosphorylation of a specific serine residue in HPr, a phosphocarrier protein of the phosphoenolpyruvate-dependent sugar phosphotransferase system (PTS). HprK/P also catalyzes the pyrophosphate-producing, inorganic phosphate-dependent dephosphorylation (phosphorolysis) of seryl-phosphorylated HPr (P-Ser-HPr). The polypeptide is HPr kinase/phosphorylase (hprK) (Mycoplasma genitalium (strain ATCC 33530 / DSM 19775 / NCTC 10195 / G37) (Mycoplasmoides genitalium)).